The chain runs to 194 residues: Potassium-transporting ATPase KdpC subunit (194 aa).

Residues 12-34 form a helical membrane-spanning segment; sequence LFLLLLTGGVYPLLTTALGQWWF.

This sequence belongs to the KdpC family. In terms of assembly, the system is composed of three essential subunits: KdpA, KdpB and KdpC.

It localises to the cell inner membrane. Functionally, part of the high-affinity ATP-driven potassium transport (or Kdp) system, which catalyzes the hydrolysis of ATP coupled with the electrogenic transport of potassium into the cytoplasm. This subunit acts as a catalytic chaperone that increases the ATP-binding affinity of the ATP-hydrolyzing subunit KdpB by the formation of a transient KdpB/KdpC/ATP ternary complex. This is Potassium-transporting ATPase KdpC subunit from Salmonella schwarzengrund (strain CVM19633).